We begin with the raw amino-acid sequence, 173 residues long: NADH-ubiquinone oxidoreductase chain 6 (173 aa).

Helical transmembrane passes span Met-1 to Ser-21, Ala-28 to Gly-48, Leu-53 to Leu-73, Val-87 to Val-107, and Leu-139 to Leu-159.

The protein belongs to the complex I subunit 6 family.

It is found in the mitochondrion membrane. It catalyses the reaction a ubiquinone + NADH + 5 H(+)(in) = a ubiquinol + NAD(+) + 4 H(+)(out). Core subunit of the mitochondrial membrane respiratory chain NADH dehydrogenase (Complex I) that is believed to belong to the minimal assembly required for catalysis. Complex I functions in the transfer of electrons from NADH to the respiratory chain. The immediate electron acceptor for the enzyme is believed to be ubiquinone. The protein is NADH-ubiquinone oxidoreductase chain 6 (MT-ND6) of Scyliorhinus canicula (Small-spotted catshark).